Reading from the N-terminus, the 253-residue chain is Ribonuclease PH (253 aa).

Residues Arg86 and 124–126 (GTR) each bind phosphate.

It belongs to the RNase PH family. Homohexameric ring arranged as a trimer of dimers.

It catalyses the reaction tRNA(n+1) + phosphate = tRNA(n) + a ribonucleoside 5'-diphosphate. Functionally, phosphorolytic 3'-5' exoribonuclease that plays an important role in tRNA 3'-end maturation. Removes nucleotide residues following the 3'-CCA terminus of tRNAs; can also add nucleotides to the ends of RNA molecules by using nucleoside diphosphates as substrates, but this may not be physiologically important. Probably plays a role in initiation of 16S rRNA degradation (leading to ribosome degradation) during starvation. In Brevibacillus brevis (strain 47 / JCM 6285 / NBRC 100599), this protein is Ribonuclease PH.